Consider the following 715-residue polypeptide: DNA ligase (715 aa).

NAD(+) contacts are provided by residues Asp47–Asp51, Ser96–Leu97, and Glu128. Lys130 acts as the N6-AMP-lysine intermediate in catalysis. NAD(+) is bound by residues Arg151, Glu188, Lys306, and Lys330. Zn(2+) contacts are provided by Cys435, Cys438, Cys453, and Cys459. The BRCT domain occupies Arg637–Asn715.

The protein belongs to the NAD-dependent DNA ligase family. LigA subfamily. It depends on Mg(2+) as a cofactor. Mn(2+) serves as cofactor.

It carries out the reaction NAD(+) + (deoxyribonucleotide)n-3'-hydroxyl + 5'-phospho-(deoxyribonucleotide)m = (deoxyribonucleotide)n+m + AMP + beta-nicotinamide D-nucleotide.. In terms of biological role, DNA ligase that catalyzes the formation of phosphodiester linkages between 5'-phosphoryl and 3'-hydroxyl groups in double-stranded DNA using NAD as a coenzyme and as the energy source for the reaction. It is essential for DNA replication and repair of damaged DNA. The chain is DNA ligase from Rhodopseudomonas palustris (strain ATCC BAA-98 / CGA009).